The primary structure comprises 240 residues: Uridylate kinase (240 aa).

12–15 (KLSG) is an ATP binding site. The interval 20–25 (GEKGFG) is involved in allosteric activation by GTP. Gly-54 serves as a coordination point for UMP. ATP is bound by residues Gly-55 and Arg-59. Residues Asp-74 and 135–142 (TGSPYFST) each bind UMP. ATP contacts are provided by Asn-163, Tyr-169, and Asp-172.

This sequence belongs to the UMP kinase family. As to quaternary structure, homohexamer.

The protein localises to the cytoplasm. The enzyme catalyses UMP + ATP = UDP + ADP. The protein operates within pyrimidine metabolism; CTP biosynthesis via de novo pathway; UDP from UMP (UMPK route): step 1/1. With respect to regulation, allosterically activated by GTP. Inhibited by UTP. Functionally, catalyzes the reversible phosphorylation of UMP to UDP. In Limosilactobacillus reuteri (Lactobacillus reuteri), this protein is Uridylate kinase.